A 1312-amino-acid chain; its full sequence is uncharacterized protein (1312 aa).

The first 20 residues, 1–20, serve as a signal peptide directing secretion; that stretch reads MRNNLIYTMFLSCLHFETFC. The span at 299 to 344 shows a compositional bias: low complexity; it reads TTTSSSTMLSSTTLLTTETETRESSSTGSTQTTTPSTEPSTTITTP. 8 disordered regions span residues 299–503, 565–609, 645–692, 749–775, 812–864, 899–942, 1048–1079, and 1114–1165; these read TTTS…TTTY, EITS…PTGG, KETR…PTGG, SSSS…PTGG, KTRT…GGTT, KTRT…PTGG, KTRT…TGGT, and NTTR…TLET. The span at 345–357 shows a compositional bias: polar residues; it reads MEQSSTVSSVQKT. Residues 365-503 are compositionally biased toward low complexity; it reads SSSTTVPTSA…STPATPTTTY (139 aa). Over residues 565–574 the composition is skewed to basic and acidic residues; the sequence is EITSDAEGCK. The span at 576 to 609 shows a compositional bias: low complexity; it reads TSSTPTPSSTSVHSTTATPSTTPGTTTYNWPTGG. Positions 645–659 are enriched in basic and acidic residues; the sequence is KETRTETTTDADGCK. A compositionally biased stretch (low complexity) spans 660-692; the sequence is KTSSTSSSTPSLKHSTTPTPTPGTTTYNWPTGG. The segment covering 813-825 has biased composition (basic and acidic residues); sequence TRTETTTDAEGCK. The segment covering 826-864 has biased composition (low complexity); it reads KTSSTSKISTTPTSPTSSKPTPTSTSMTTTYNWPTGGTT. A compositionally biased stretch (polar residues) spans 899 to 908; the sequence is KTRTETTTDA. Residues 914-942 are compositionally biased toward low complexity; that stretch reads TSSTSLKPTSPSSSTASPPTTTYNWPTGG. Positions 1048 to 1057 are enriched in polar residues; sequence KTRTETTSDA. A compositionally biased stretch (low complexity) spans 1063–1076; it reads TSTTQTPTTFNWPT. Residues 1114-1123 are compositionally biased toward polar residues; sequence NTTRTETTSD. Positions 1130–1154 are enriched in low complexity; sequence TSSGTTSTMSPGTTGGTTVSRTTNS. Residues 1155–1164 are compositionally biased toward polar residues; the sequence is NNPIDSSTLE. In terms of domain architecture, Sushi spans 1239 to 1306; the sequence is ATCSSLNLNL…WSGTPEKCVA (68 aa). Intrachain disulfides connect C1241–C1291 and C1273–C1304.

The protein resides in the secreted. This is an uncharacterized protein from Caenorhabditis elegans.